Consider the following 37-residue polypeptide: Potassium channel toxin alpha-KTx 3.9 (37 aa).

3 disulfide bridges follow: C7–C27, C13–C32, and C17–C34. An interaction with Ca(2+)-activated K(+) channels region spans residues 25–32 (GKCMNRKC).

It belongs to the short scorpion toxin superfamily. Potassium channel inhibitor family. Alpha-KTx 03 subfamily. As to expression, expressed by the venom gland.

The protein resides in the secreted. Functionally, binds and inhibits potassium channels. Intracerebroventricular injection into mice induces paralyzing symptoms followed by death. Its binding affinity to rat brain synaptosomes is 5-fold lower than this of KTX 1. This Buthus occitanus tunetanus (Common European scorpion) protein is Potassium channel toxin alpha-KTx 3.9 (KTX3).